Reading from the N-terminus, the 451-residue chain is Phosphoglucosamine mutase (451 aa).

The active-site Phosphoserine intermediate is the Ser-102. Positions 102, 243, 245, and 247 each coordinate Mg(2+). The residue at position 102 (Ser-102) is a Phosphoserine.

Belongs to the phosphohexose mutase family. Requires Mg(2+) as cofactor. Activated by phosphorylation.

The catalysed reaction is alpha-D-glucosamine 1-phosphate = D-glucosamine 6-phosphate. Its function is as follows. Catalyzes the conversion of glucosamine-6-phosphate to glucosamine-1-phosphate. The polypeptide is Phosphoglucosamine mutase (Chelativorans sp. (strain BNC1)).